The sequence spans 141 residues: Putative pre-16S rRNA nuclease (141 aa).

It belongs to the YqgF nuclease family.

The protein localises to the cytoplasm. In terms of biological role, could be a nuclease involved in processing of the 5'-end of pre-16S rRNA. This is Putative pre-16S rRNA nuclease from Coxiella burnetii (strain CbuG_Q212) (Coxiella burnetii (strain Q212)).